A 288-amino-acid polypeptide reads, in one-letter code: Borealin (288 aa).

The segment at 1 to 58 (MAPKKRSSRGTRTNTLRSRKLASFLKDFDREVQVRTKQIESDRQTLLKEVENLYNIEV) is required for interaction with INCENP. Residues 1–88 (MAPKKRSSRG…NRQALEEAAT (88 aa)) form a required for centromere localization region. Residues 1-149 (MAPKKRSSRG…RKSHKNLRSA (149 aa)) form a required for interaction with SENP3 region. The required to form a minimal CPC core complex that localizes to the central spindle and midbody and properly executes the role of the CPC during cytokinesis stretch occupies residues 10–109 (GTRTNTLRSR…TAEAIQTPLK (100 aa)). Positions 20–78 (KLASFLKDFDREVQVRTKQIESDRQTLLKEVENLYNIEVLRLPKALQVMKWLDYFALGG) are required for interaction with INCENP and BIRC5. Position 88 is a phosphothreonine; by TTK (Thr-88). A Citrulline modification is found at Arg-91. The residue at position 94 (Thr-94) is a Phosphothreonine; by TTK. Thr-106 is modified (phosphothreonine). Residue Ser-110 is modified to Phosphoserine. A compositionally biased stretch (acidic residues) spans 124 to 134 (KEEEEDEEEEG). The tract at residues 124–173 (KEEEEDEEEEGGGGGGRKSHKNLRSARVKRCPPSKKRTQSIQGRSRSKRL) is disordered. The span at 140-161 (RKSHKNLRSARVKRCPPSKKRT) shows a compositional bias: basic residues. Lys-144 participates in a covalent cross-link: Glycyl lysine isopeptide (Lys-Gly) (interchain with G-Cter in SUMO2). Ser-174 carries the phosphoserine; by AURKB modification. Phosphothreonine is present on residues Thr-197 and Thr-212. A phosphoserine mark is found at Ser-227, Ser-232, Ser-246, and Ser-252.

This sequence belongs to the borealin family. As to quaternary structure, may form homooligomers and homodimers. Component of the chromosomal passenger complex (CPC) composed of at least BIRC5/survivin, CDCA8/borealin, INCENP, AURKB or AURKC; in the complex forms a triple-helix bundle-based subcomplex with INCENP and BIRC5. Interacts with SENP3, UBE2I and RANBP2. Interacts (phosphorylated) with SGO1 and SGO2; the association is dependent on CDK1. Phosphorylated by TTK, essentially at Thr-88 and Thr-94. Phosphorylation (probably by CDK1) promotes targeting of the CPC to centromeric DNA. Post-translationally, sumoylated by UBE2I and RANBP2. Desumoylated by SENP3 through the removal of SUMO2 and SUMO3. In terms of processing, citrullinated by PADI4.

It is found in the nucleus. Its subcellular location is the nucleolus. It localises to the cytoplasm. The protein localises to the chromosome. The protein resides in the centromere. It is found in the cytoskeleton. Its subcellular location is the spindle. Functionally, component of the chromosomal passenger complex (CPC), a complex that acts as a key regulator of mitosis. The CPC complex has essential functions at the centromere in ensuring correct chromosome alignment and segregation and is required for chromatin-induced microtubule stabilization and spindle assembly. In the complex, it may be required to direct the CPC to centromeric DNA. This Rattus norvegicus (Rat) protein is Borealin (Cdca8).